Here is an 845-residue protein sequence, read N- to C-terminus: Envelope glycoprotein B (845 aa).

An N-terminal signal peptide occupies residues 1 to 41 (MSFTDQTYTRSCMHTCITRDHRLYGIVIISLLLLLDNSVFC). Residues 42 to 727 (QNENKVIDIK…SGVASFLQNP (686 aa)) are Virion surface-facing. 5 disulfides stabilise this stretch: Cys62-Cys523, Cys80-Cys479, Cys153-Cys218, Cys310-Cys358, and Cys552-Cys591. The segment at 120-126 (RYADVFS) is involved in fusion and/or binding to host membrane. Asn175 carries N-linked (GlcNAc...) asparagine; by host glycosylation. The segment at 204–212 (LPGTWLRKT) is involved in fusion and/or binding to host membrane. 7 N-linked (GlcNAc...) asparagine; by host glycosylation sites follow: Asn328, Asn388, Asn414, Asn420, Asn425, Asn564, and Asn632. Residues 677–725 (LEQAIVTKPYVPPAGMQQALQGLSGVGSVITGTLGAMQSLVSGVASFLQ) are hydrophobic membrane proximal region. The helical transmembrane segment at 728 to 748 (FGGTLSIILIGCIIVGVIIIY) threads the bilayer. Over 749–845 (NRMNQSRGSP…GYTTLSSMNI (97 aa)) the chain is Intravirion. Residues 837-840 (YTTL) carry the Internalization motif motif.

This sequence belongs to the herpesviridae glycoprotein B family. In terms of assembly, homotrimer; disulfide-linked. Binds to heparan sulfate proteoglycans. Interacts with gH/gL heterodimer. A proteolytic cleavage by host furin generates two subunits that remain linked by disulfide bonds.

Its subcellular location is the virion membrane. The protein localises to the host cell membrane. It is found in the host endosome membrane. It localises to the host Golgi apparatus membrane. Its function is as follows. Envelope glycoprotein that forms spikes at the surface of virion envelope. Essential for the initial attachment to heparan sulfate moieties of the host cell surface proteoglycans. Involved in fusion of viral and cellular membranes leading to virus entry into the host cell. Following initial binding to its host receptors, membrane fusion is mediated by the fusion machinery composed at least of gB and the heterodimer gH/gL. May be involved in the fusion between the virion envelope and the outer nuclear membrane during virion egress. This chain is Envelope glycoprotein B, found in Elephas maximus (Indian elephant).